An 82-amino-acid chain; its full sequence is MAAGSTGERPFFEIITSIRYWVIHAITLPSIFLAGFLFVSTGLAYDAFGTPRPDAYFQATESKAPVVSQRYEGKSQLDDRLQ.

Residues 22 to 36 (VIHAITLPSIFLAGF) form a helical membrane-spanning segment. His-24 lines the heme pocket.

The protein belongs to the PsbE/PsbF family. As to quaternary structure, heterodimer of an alpha subunit and a beta subunit. PSII is composed of 1 copy each of membrane proteins PsbA, PsbB, PsbC, PsbD, PsbE, PsbF, PsbH, PsbI, PsbJ, PsbK, PsbL, PsbM, PsbT, PsbX, PsbY, PsbZ, Psb30/Ycf12, peripheral proteins PsbO, CyanoQ (PsbQ), PsbU, PsbV and a large number of cofactors. It forms dimeric complexes. Heme b is required as a cofactor.

It localises to the cellular thylakoid membrane. This b-type cytochrome is tightly associated with the reaction center of photosystem II (PSII). PSII is a light-driven water:plastoquinone oxidoreductase that uses light energy to abstract electrons from H(2)O, generating O(2) and a proton gradient subsequently used for ATP formation. It consists of a core antenna complex that captures photons, and an electron transfer chain that converts photonic excitation into a charge separation. The protein is Cytochrome b559 subunit alpha of Synechococcus sp. (strain WH7803).